The primary structure comprises 141 residues: Endoribonuclease YbeY (141 aa).

His101, His105, and His111 together coordinate Zn(2+).

The protein belongs to the endoribonuclease YbeY family. Requires Zn(2+) as cofactor.

It is found in the cytoplasm. In terms of biological role, single strand-specific metallo-endoribonuclease involved in late-stage 70S ribosome quality control and in maturation of the 3' terminus of the 16S rRNA. This Nitrosomonas eutropha (strain DSM 101675 / C91 / Nm57) protein is Endoribonuclease YbeY.